The following is a 145-amino-acid chain: D-aminoacyl-tRNA deacylase (145 aa).

A Gly-cisPro motif, important for rejection of L-amino acids motif is present at residues 137–138 (GP).

It belongs to the DTD family. Homodimer.

The protein resides in the cytoplasm. It carries out the reaction glycyl-tRNA(Ala) + H2O = tRNA(Ala) + glycine + H(+). It catalyses the reaction a D-aminoacyl-tRNA + H2O = a tRNA + a D-alpha-amino acid + H(+). In terms of biological role, an aminoacyl-tRNA editing enzyme that deacylates mischarged D-aminoacyl-tRNAs. Also deacylates mischarged glycyl-tRNA(Ala), protecting cells against glycine mischarging by AlaRS. Acts via tRNA-based rather than protein-based catalysis; rejects L-amino acids rather than detecting D-amino acids in the active site. By recycling D-aminoacyl-tRNA to D-amino acids and free tRNA molecules, this enzyme counteracts the toxicity associated with the formation of D-aminoacyl-tRNA entities in vivo and helps enforce protein L-homochirality. This Cereibacter sphaeroides (strain KD131 / KCTC 12085) (Rhodobacter sphaeroides) protein is D-aminoacyl-tRNA deacylase.